The chain runs to 425 residues: MDYINLNYRPNEGDLLSCMVIKGENLEKLANEIAGESSIGTWTKVQTMKSDIYEKLRPKVYEIKEIGEENGYKVGLIKIAYPLYDFEINNMPGVLAGIAGNIFGMKIAKGLRILDFRFPAEFVKAYKGPRFGIEGVRETLKIKERPLLGTIVKPKVGLKTEEHAKVAYEAWVGGVDLVKDDENLTSQEFNKFEDRIYKTLEMRDKAEEETGERKAYMPNITAPYREMIRRAEIAEDAGSEYVMIDVVVCGFSAVQSFREEDFKFIIHAHRAMHAAMTRSRDFGISMLALAKIYRLLGVDQLHIGTVVGKMEGGEKEVKAIRDEIVYDKVEADNENKFFNQDWFDIKPVFPVSSGGVHPRLVPKIVEILGRDLIIQAGGGVHGHPDGTRAGAKAMRAAIEAIIEGKSLEEKAEEVAELKKALEYWK.

Lys153 acts as the Proton acceptor in catalysis. Lys155 provides a ligand contact to substrate. 3 residues coordinate Mg(2+): Lys179, Asp181, and Glu182. The residue at position 179 (Lys179) is an N6-carboxylysine. His269 (proton acceptor) is an active-site residue. Substrate-binding positions include Arg270, His302, 353–355 (SGG), and 375–378 (QAGG).

It belongs to the RuBisCO large chain family. Type III subfamily. Homodimer. In contrast to form I RuBisCO, the form III RuBisCO is composed solely of large subunits. It depends on Mg(2+) as a cofactor.

The enzyme catalyses 2 (2R)-3-phosphoglycerate + 2 H(+) = D-ribulose 1,5-bisphosphate + CO2 + H2O. It carries out the reaction D-ribulose 1,5-bisphosphate + O2 = 2-phosphoglycolate + (2R)-3-phosphoglycerate + 2 H(+). Reversibly inhibited by O(2). Its function is as follows. Catalyzes the addition of molecular CO(2) and H(2)O to ribulose 1,5-bisphosphate (RuBP), generating two molecules of 3-phosphoglycerate (3-PGA). Functions in an archaeal AMP degradation pathway, together with AMP phosphorylase and R15P isomerase. The polypeptide is Ribulose bisphosphate carboxylase (Methanocaldococcus jannaschii (strain ATCC 43067 / DSM 2661 / JAL-1 / JCM 10045 / NBRC 100440) (Methanococcus jannaschii)).